Reading from the N-terminus, the 215-residue chain is Urease accessory protein UreG (215 aa).

24–31 (GPVGSGKT) lines the GTP pocket.

The protein belongs to the SIMIBI class G3E GTPase family. UreG subfamily. In terms of assembly, homodimer. UreD, UreF and UreG form a complex that acts as a GTP-hydrolysis-dependent molecular chaperone, activating the urease apoprotein by helping to assemble the nickel containing metallocenter of UreC. The UreE protein probably delivers the nickel.

It is found in the cytoplasm. Facilitates the functional incorporation of the urease nickel metallocenter. This process requires GTP hydrolysis, probably effectuated by UreG. This Burkholderia ambifaria (strain MC40-6) protein is Urease accessory protein UreG.